Consider the following 353-residue polypeptide: N6-methyladenosine RNA demethylase ALKB1 (353 aa).

The Fe2OG dioxygenase domain occupies 223-352 (IAQAAIVNFY…RINLNVRQMR (130 aa)). Fe cation contacts are provided by H241, D243, and H308. R343 lines the 2-oxoglutarate pocket.

Belongs to the alkB family. Fe(2+) serves as cofactor.

It localises to the cytoplasm. The protein localises to the P-body. The enzyme catalyses an N(6)-methyladenosine in mRNA + 2-oxoglutarate + O2 = an adenosine in mRNA + formaldehyde + succinate + CO2. Its function is as follows. RNA demethylase that regulates the stability of mRNAs through an m(6)A-dependent manner. M6A is a modification present at internal sites of mRNAs and some non-coding RNAs and plays a role in mRNA stability and processing. Plays a role in pathogenicity towards plant host. The sequence is that of N6-methyladenosine RNA demethylase ALKB1 from Pyricularia oryzae (strain 70-15 / ATCC MYA-4617 / FGSC 8958) (Rice blast fungus).